The sequence spans 140 residues: Phosphoribosyl-AMP cyclohydrolase (140 aa).

Aspartate 78 contacts Mg(2+). Position 79 (cysteine 79) interacts with Zn(2+). Mg(2+) contacts are provided by aspartate 80 and aspartate 82. Zn(2+) is bound by residues cysteine 96 and cysteine 103.

It belongs to the PRA-CH family. Homodimer. Mg(2+) is required as a cofactor. Zn(2+) serves as cofactor.

The protein resides in the cytoplasm. It carries out the reaction 1-(5-phospho-beta-D-ribosyl)-5'-AMP + H2O = 1-(5-phospho-beta-D-ribosyl)-5-[(5-phospho-beta-D-ribosylamino)methylideneamino]imidazole-4-carboxamide. It participates in amino-acid biosynthesis; L-histidine biosynthesis; L-histidine from 5-phospho-alpha-D-ribose 1-diphosphate: step 3/9. In terms of biological role, catalyzes the hydrolysis of the adenine ring of phosphoribosyl-AMP. This is Phosphoribosyl-AMP cyclohydrolase from Ralstonia pickettii (strain 12J).